The chain runs to 139 residues: D-ribose pyranase (139 aa).

His-20 serves as the catalytic Proton donor. Residues Asp-28, His-106, and 128-130 contribute to the substrate site; that span reads YAN.

It belongs to the RbsD / FucU family. RbsD subfamily. In terms of assembly, homodecamer.

Its subcellular location is the cytoplasm. It catalyses the reaction beta-D-ribopyranose = beta-D-ribofuranose. It participates in carbohydrate metabolism; D-ribose degradation; D-ribose 5-phosphate from beta-D-ribopyranose: step 1/2. Functionally, catalyzes the interconversion of beta-pyran and beta-furan forms of D-ribose. This chain is D-ribose pyranase, found in Aliivibrio fischeri (strain MJ11) (Vibrio fischeri).